The primary structure comprises 2228 residues: Genome polyprotein (2228 aa).

A disordered region spans residues 56 to 76; it reads AEVGAHQSEPLKTSVDKPGSK. 2 short sequence motifs ((L)YPX(n)L motif) span residues 167 to 171 and 200 to 205; these read YPHGL and YPVWEL. Residues 766–836 are involved in P1-2A pentamerization; sequence MLDRIALGDL…PRKIKGVFSQ (71 aa). Residues 1011-1031 form a helical membrane-spanning segment; the sequence is TVEIINTVLCFVKSGILLYVI. The segment at 1043-1070 is membrane-penetrating ability; the sequence is IGLLRVMNYADIGCSVISCGKVFSKMLE. Residues 1127 to 1152 are a coiled coil; sequence NKKDVLNILKDNQQKIERAIEEADNF. The region spanning 1204–1366 is the SF3 helicase domain; sequence HQKLKNLGSI…SFFKNPHNDM (163 aa). 1230 to 1237 is an ATP binding site; sequence GKRGGGKS. Residues 1462-1482 form a helical membrane-spanning segment; the sequence is WVAVGAAVGVLGVLVGGWYVY. O-(5'-phospho-RNA)-tyrosine is present on Tyr-1499. One can recognise a Peptidase C3 domain in the interval 1514-1728; the sequence is DPVESQSTLE…VAKLVTQEMF (215 aa). Residues His-1563, Asp-1603, and Cys-1691 each act as for protease 3C activity in the active site. The region spanning 1977 to 2098 is the RdRp catalytic domain; the sequence is DVGLDLDFSA…VFSRQVQFDN (122 aa).

The protein belongs to the picornaviridae polyprotein family. In terms of assembly, homodimer. Homomultimer; probably interacts with membranes in a multimeric form. Seems to assemble into amyloid-like fibers. As to quaternary structure, homodimer. Monomer. Interacts with protein 3CD. Interacts with host ACBD3. In terms of assembly, interacts with protein 3AB. As to quaternary structure, interacts with human MAVS. Homodimer; disulfide-linked. In terms of assembly, homopentamer. Homooligomer. As to quaternary structure, interacts with capsid protein VP2. Interacts with capsid protein VP3. Interacts with capsid protein VP1. Interacts with capsid protein VP3. In terms of assembly, interacts with capsid protein VP1. Interacts with capsid protein VP2. Specific enzymatic cleavages by viral protease in vivo yield a variety of precursors and mature proteins. Polyprotein processing intermediates are produced, such as P1-2A which is a functional precursor of the structural proteins, VP0 which is a VP4-VP2 precursor, VP1-2A precursor, 3ABC precursor which is a stable and catalytically active precursor of 3A, 3B and 3C proteins, 3AB and 3CD precursors. The assembly signal 2A is removed from VP1-2A by a host protease, possibly host Cathepsin L. This cleavage occurs over a region of 3 amino-acids probably generating VP1 proteins with heterogeneous C-termini. Post-translationally, during virion maturation, immature virions are rendered infectious following cleavage of VP0 into VP4 and VP2. This maturation seems to be an autocatalytic event triggered by the presence of RNA in the capsid and is followed by a conformational change of the particle. In terms of processing, the assembly signal 2A is removed from VP1-2A by a host protease, possibly host Cathepsin L in naked virions. This cleavage does not occur in enveloped virions. This cleavage occurs over a region of 3 amino-acids probably generating VP1 proteins with heterogeneous C-termini. VPg is uridylylated prior to priming replication into VPg-pUpU. Post-translationally, unlike other picornaviruses, does not seem to be myristoylated.

The protein resides in the virion. Its subcellular location is the host endosome. The protein localises to the host multivesicular body. It is found in the host membrane. It localises to the host mitochondrion outer membrane. The protein resides in the host cytoplasm. Its subcellular location is the host cytoplasmic vesicle membrane. It catalyses the reaction RNA(n) + a ribonucleoside 5'-triphosphate = RNA(n+1) + diphosphate. The enzyme catalyses a ribonucleoside 5'-triphosphate + H2O = a ribonucleoside 5'-diphosphate + phosphate + H(+). It carries out the reaction Selective cleavage of Gln-|-Gly bond in the poliovirus polyprotein. In other picornavirus reactions Glu may be substituted for Gln, and Ser or Thr for Gly.. In terms of biological role, capsid proteins VP1, VP2, and VP3 form a closed capsid enclosing the viral positive strand RNA genome. All these proteins contain a beta-sheet structure called beta-barrel jelly roll. Together they form an icosahedral capsid (T=3) composed of 60 copies of each VP1, VP2, and VP3, with a diameter of approximately 300 Angstroms. VP1 is situated at the 12 fivefold axes, whereas VP2 and VP3 are located at the quasi-sixfold axes. The naked capsid interacts with the host receptor HAVCR1 to provide virion attachment to and probably entry into the target cell. Its function is as follows. VP0 precursor is a component of the immature procapsids. Plays a role in the assembly of the 12 pentamers into an icosahedral structure. Has not been detected in mature virions, supposedly owing to its small size. Functionally, precursor component of immature procapsids that corresponds to an extended form of the structural protein VP1. After maturation, possibly by the host Cathepsin L, the assembly signal 2A is cleaved to give rise to the mature VP1 protein. In terms of biological role, functions as a viroporin. Affects membrane integrity and causes an increase in membrane permeability. Involved in host intracellular membrane rearrangements probably to give rise to the viral factories. Does not disrupt calcium homeostasis or glycoprotein trafficking. Antagonizes the innate immune response of the host by suppressing IFN-beta synthesis, which it achieves by interfering with the RIG-I/IFIH1 pathway. Its function is as follows. Affects membrane integrity and causes an increase in membrane permeability. Associates with and induces structural rearrangements of intracellular membranes. Displays RNA-binding activity. Functionally, the precursor 3ABC is targeted to the mitochondrial membrane where protease 3C activity cleaves and inhibits the host antiviral protein MAVS, thereby disrupting activation of IRF3 through the IFIH1/MDA5 pathway. In vivo, the protease activity of 3ABC precursor is more efficient in cleaving the 2BC precursor than that of protein 3C. The 3ABC precursor may therefore play a role in the proteolytic processing of the polyprotein. Possible viroporin. In terms of biological role, interacts with the 3CD precursor and with RNA structures found at both the 5'- and 3'-termini of the viral genome. Since the 3AB precursor contains the hydrophobic domain 3A, it probably anchors the whole viral replicase complex to intracellular membranes on which viral RNA synthesis occurs. Its function is as follows. May serve as membrane anchor to the 3AB and 3ABC precursors via its hydrophobic domain. May interact with RNA. Acts as a primer for viral RNA replication and remains covalently bound to viral genomic RNA. VPg is uridylylated prior to priming replication into VPg-pUpU. The VPg-pUpU is then used as primer on the genomic RNA poly(A) by the RNA-dependent RNA polymerase to replicate the viral genome. Functionally, cysteine protease that generates mature viral proteins from the precursor polyprotein. In addition to its proteolytic activity, it binds to viral RNA, and thus influences viral genome replication. RNA and substrate bind cooperatively to the protease. Cleaves IKBKG/NEMO to impair innate immune signaling. Cleaves host PABPC1 which may participate in the switch of viral translation to RNA synthesis. In terms of biological role, interacts with the 3AB precursor and with RNA structures found at both the 5'- and 3'-termini of the viral genome. Disrupts TLR3 signaling by degrading the host adapter protein TICAM1/TRIF. Its function is as follows. RNA-directed RNA polymerase 3D-POL replicates genomic and antigenomic RNA by recognizing replications specific signals. The protein is Genome polyprotein of Cercopithecus hamlyni (Owl-faced monkey).